The following is a 383-amino-acid chain: Processive diacylglycerol beta-glucosyltransferase (383 aa).

This sequence belongs to the glycosyltransferase 28 family. UgtP subfamily.

Its subcellular location is the cell membrane. It catalyses the reaction a 1,2-diacyl-3-O-(beta-D-glucopyranosyl)-sn-glycerol + UDP-alpha-D-glucose = a 1,2-diacyl-3-O-(beta-D-Glc-(1-&gt;6)-beta-D-Glc)-sn-glycerol + UDP + H(+). The catalysed reaction is a 1,2-diacyl-3-O-(beta-D-Glc-(1-&gt;6)-beta-D-Glc)-sn-glycerol + UDP-alpha-D-glucose = a 1,2-diacyl-3-O-(beta-D-Glc-(1-&gt;6)-beta-D-Glc-(1-&gt;6)-beta-D-Glc)-sn-glycerol + UDP + H(+). The enzyme catalyses a 1,2-diacyl-sn-glycerol + UDP-alpha-D-glucose = a 1,2-diacyl-3-O-(beta-D-glucopyranosyl)-sn-glycerol + UDP + H(+). It participates in glycolipid metabolism; diglucosyl-diacylglycerol biosynthesis. In terms of biological role, processive glucosyltransferase involved in the biosynthesis of both the bilayer- and non-bilayer-forming membrane glucolipids. Is able to successively transfer up to three glucosyl residues to diacylglycerol (DAG), thereby catalyzing the formation of beta-monoglucosyl-DAG (3-O-(beta-D-glucopyranosyl)-1,2-diacyl-sn-glycerol), beta-diglucosyl-DAG (3-O-(beta-D-glucopyranosyl-beta-(1-&gt;6)-D-glucopyranosyl)-1,2-diacyl-sn-glycerol) and beta-triglucosyl-DAG (3-O-(beta-D-glucopyranosyl-beta-(1-&gt;6)-D-glucopyranosyl-beta-(1-&gt;6)-D-glucopyranosyl)-1,2-diacyl-sn-glycerol). Beta-diglucosyl-DAG is the predominant glycolipid found in Bacillales and is also used as a membrane anchor for lipoteichoic acid (LTA). This is Processive diacylglycerol beta-glucosyltransferase from Bacillus pumilus (strain SAFR-032).